The following is a 489-amino-acid chain: CDK5RAP3 protein homolog (489 aa).

Belongs to the CDK5RAP3 family.

Functionally, substrate adapter of E3 ligase complexes mediating ufmylation, the covalent attachment of the ubiquitin-like modifier UFM1 to substrate proteins, and which is involved in various processes, such as ribosome recycling and reticulophagy (also called ER-phagy). The chain is CDK5RAP3 protein homolog from Caenorhabditis elegans.